Consider the following 55-residue polypeptide: Large ribosomal subunit protein bL33 (55 aa).

Belongs to the bacterial ribosomal protein bL33 family.

In Rhizobium meliloti (strain 1021) (Ensifer meliloti), this protein is Large ribosomal subunit protein bL33.